Here is a 184-residue protein sequence, read N- to C-terminus: Cathelicidin-related peptide Pt_CRAMP2 (184 aa).

The first 22 residues, 1–22 (MDGFFWKTWLVVAALAIGGTSS), serve as a signal peptide directing secretion. The propeptide occupies 23-150 (LPHKPLTYEE…EDEKDQPRRV (128 aa)). Cystine bridges form between Cys-81–Cys-92 and Cys-103–Cys-120. Residues 125–144 (EDEEQNQEEEEEEEKEEDEK) are compositionally biased toward acidic residues. A disordered region spans residues 125 to 147 (EDEEQNQEEEEEEEKEEDEKDQP).

It belongs to the cathelicidin family. As to expression, expressed by the venom gland.

It is found in the secreted. Its subcellular location is the target cell membrane. Potent antimicrobial peptide against most of Gram-negative bacteria, some Gram-positive bacteria (Bacillus) and some fungi (C.albicans, P.pastoris, A.terreus, A.nidulans, and C.globosum). Adopts an amphipathic alpha helical conformation, that may allow to partition into the target membrane. No hemolytic and cytotoxic activities have been observed on mammalian cells. The polypeptide is Cathelicidin-related peptide Pt_CRAMP2 (Pseudonaja textilis (Eastern brown snake)).